An 848-amino-acid polypeptide reads, in one-letter code: Probable serine/threonine-protein kinase DDB_G0278535 (848 aa).

Composition is skewed to low complexity over residues 1–52, 60–85, and 95–116; these read MNKS…NNNH, TAAT…TSST, and TSNS…VSTS. The interval 1–117 is disordered; sequence MNKSSSASTV…SSSPQVSTSV (117 aa). ANK repeat units follow at residues 181–212, 218–248, 252–285, 289–320, and 324–353; these read MDQT…KMDI, SGYT…NVNI, DKNS…NVNA, NGET…EVNV, and RGES…DITI. The region spanning 378 to 441 is the SAM domain; it reads KNVQDIFNWL…IRNCRILRDQ (64 aa). A disordered region spans residues 448–478; the sequence is NSNVTTGSGSSGSTTTTTTTTTTTSGCGGLN. The span at 452–472 shows a compositional bias: low complexity; it reads TTGSGSSGSTTTTTTTTTTTS. The 271-residue stretch at 529 to 799 folds into the Protein kinase domain; sequence LEYTLKLGSG…TLNRLRHEYM (271 aa). ATP contacts are provided by residues 535–543 and Lys-556; that span reads LGSGSSGKV. Asp-650 functions as the Proton acceptor in the catalytic mechanism. Positions 810 to 848 are disordered; sequence RKLPSLSPPPQPTTTTTTTTSSSTSTNNINNNINNNNNT. Residues 822–848 are compositionally biased toward low complexity; the sequence is TTTTTTTTSSSTSTNNINNNINNNNNT.

Belongs to the protein kinase superfamily. TKL Ser/Thr protein kinase family.

It carries out the reaction L-seryl-[protein] + ATP = O-phospho-L-seryl-[protein] + ADP + H(+). The catalysed reaction is L-threonyl-[protein] + ATP = O-phospho-L-threonyl-[protein] + ADP + H(+). This is Probable serine/threonine-protein kinase DDB_G0278535 from Dictyostelium discoideum (Social amoeba).